The following is a 327-amino-acid chain: Solute-binding protein SPO1773 (327 aa).

The first 26 residues, 1-26 (MTISFKGLARGVACAALVLAALPAAA), serve as a signal peptide directing secretion. Residues 39-41 (HTW), arginine 150, 170-172 (RIT), and aspartate 211 each bind 3-hydroxybenzoate.

This sequence belongs to the bacterial solute-binding protein 7 family. As to quaternary structure, the complex is comprised of an extracytoplasmic solute-binding protein and a heteromeric permease formed by two transmembrane proteins.

Its subcellular location is the periplasm. Its function is as follows. Solute-binding protein that binds 3,4-dihydroxybenzoate and 3-hydroxybenzoate (in vitro). Probably part of a tripartite ATP-independent periplasmic (TRAP) transport system that mediates solute transport into the cytoplasm. The polypeptide is Solute-binding protein SPO1773 (Ruegeria pomeroyi (strain ATCC 700808 / DSM 15171 / DSS-3) (Silicibacter pomeroyi)).